Consider the following 540-residue polypeptide: Glucose-6-phosphate isomerase (540 aa).

Glu350 (proton donor) is an active-site residue. Catalysis depends on residues His381 and Lys503.

It belongs to the GPI family.

The protein localises to the cytoplasm. The catalysed reaction is alpha-D-glucose 6-phosphate = beta-D-fructose 6-phosphate. It participates in carbohydrate biosynthesis; gluconeogenesis. The protein operates within carbohydrate degradation; glycolysis; D-glyceraldehyde 3-phosphate and glycerone phosphate from D-glucose: step 2/4. In terms of biological role, catalyzes the reversible isomerization of glucose-6-phosphate to fructose-6-phosphate. This chain is Glucose-6-phosphate isomerase, found in Burkholderia orbicola (strain MC0-3).